Here is a 130-residue protein sequence, read N- to C-terminus: Large ribosomal subunit protein bL19c (130 aa).

It belongs to the bacterial ribosomal protein bL19 family.

It is found in the plastid. It localises to the chloroplast. This Chlorella vulgaris (Green alga) protein is Large ribosomal subunit protein bL19c (rpl19).